We begin with the raw amino-acid sequence, 1141 residues long: Envelopment polyprotein (1141 aa).

Positions 1 to 19 are cleaved as a signal peptide; sequence MFCLCLSLLGLLLCWPAAT. The Lumenal portion of the chain corresponds to 20–489; that stretch reads RNLLELKVEC…CVPGLHGWAT (470 aa). Disulfide bonds link C29-C154, C63-C160, C112-C131, C136-C141, C178-C188, and C213-C252. N137 carries an N-linked (GlcNAc...) asparagine; by host glycan. Residue N352 is glycosylated (N-linked (GlcNAc...) asparagine; by host). 4 disulfides stabilise this stretch: C381/C440, C385/C394, C410/C429, and C457/C480. A glycan (N-linked (GlcNAc...) asparagine; by host) is linked at N404. Residues 490 to 510 traverse the membrane as a helical segment; that stretch reads ISLLITFCFGWLAIPLLSMII. Residues 511–632 are Cytoplasmic-facing; that stretch reads IRFLLIFTYL…LSMFRYKSKC (122 aa). Residues 521–538 are binding to the ribonucleoprotein; sequence CSKYSTDSKFKLIIEKVK. CCHC-type zinc fingers lie at residues 550–570 and 575–596; these read CEVC…KKSC and CPYC…FKVC. 3 binding to the ribonucleoprotein regions span residues 593–610, 597–608, and 616–630; these read FKVC…KKSL, KLTTRFQENLKK, and KRGL…RYKS. The interval 612–653 is inhibition of interferon induction; sequence TYEPKRGLYRTLSMFRYKSKCYVGLVWCILLTMELIVWAASA. The region spanning 616-639 is the ITAM domain; that stretch reads KRGLYRTLSMFRYKSKCYVGLVWC. Y620 and Y633 each carry phosphotyrosine. The YxxL signature appears at 620-623; sequence YRTL. The helical transmembrane segment at 633–653 threads the bilayer; it reads YVGLVWCILLTMELIVWAASA. Residues 654-1109 are Lumenal-facing; the sequence is ETINLEPGWT…EWLLGILSGN (456 aa). Disulfide bonds link C740/C775, C744/C782, C756/C889, C770/C900, C785/C908, C811/C820, C828/C837, and C868/C872. Residues 762–782 form a fusion loop region; it reads FEFETGWGCNPPDCPGVGTGC. Residue N932 is glycosylated (N-linked (GlcNAc...) asparagine; by host). 5 disulfide bridges follow: C974–C1004, C997–C1049, C1014–C1019, C1050–C1055, and C1089–C1093. The chain crosses the membrane as a helical span at residues 1110–1130; that stretch reads WMVVAVLIALFIFSLLLFSLC. The interval 1126–1141 is binding to the ribonucleoprotein; sequence LFSLCCPRRQNYKKNK. Residues 1131–1141 are Cytoplasmic-facing; it reads CPRRQNYKKNK.

This sequence belongs to the hantavirus envelope glycoprotein family. As to quaternary structure, homodimer. Homotetramer; forms heterotetrameric Gn-Gc spikes in the pre-fusion conformation. Interacts (via C-terminus) with the nucleoprotein. Interacts with host TUFM; this interaction contributes to the virus-induced degradation of mitochondria by autophagy, which leads to degradation of host MAVS and inhibition of type I interferon (IFN) responses. Interacts with host MAP1LC3B; this interaction contributes to the virus-induced degradation of mitochondria by autophagy, which leads to degradation of host MAVS and inhibition of type I interferon (IFN) responses. Homodimer. Homotetramer; forms heterotetrameric Gn-Gc spikes in the pre-fusion conformation. Homotrimer; forms homotrimer in the post-fusion conformation at acidic pH. Interacts (via C-terminus) with the nucleoprotein. In terms of processing, envelope polyprotein precursor is quickly cleaved in vivo just after synthesis, presumably by host signal peptidase.

Its subcellular location is the virion membrane. The protein localises to the host cell surface. The protein resides in the host Golgi apparatus membrane. It is found in the host endoplasmic reticulum membrane. It localises to the host mitochondrion. Forms homotetramers with glycoprotein C at the surface of the virion. Attaches the virion to host cell receptors including integrin alpha5/ITGB1. This attachment induces virion internalization predominantly through clathrin-dependent endocytosis. Mediates the assembly and budding of infectious virus particles through its interaction with the nucleocapsid protein and the viral genome. May dysregulate normal immune and endothelial cell responses through an ITAM motif. Translocates to mitochondria, binds to host TUFM and recruits MAP1LC3B. These interactions induce mitochondrial autophagy and therefore destruction of host MAVS leading to inhibition of type I interferon (IFN) responses. Concomitant breakdown of glycoprotein N is apparently prevented by the nucleoprotein that may inhibit Gn-stimulated autophagosome-lysosome fusion. Interacts with the viral genomic RNA. Inhibits the host RIG-I/TBK1 pathway by disrupting the formation of TBK1-TRAF3 complexes and downstream signaling responses required for IFN-beta transcription. Its function is as follows. Forms homotetramers with glycoprotein N at the surface of the virion. Attaches the virion to host cell receptors including integrin ITGAV/ITGB3. This attachment induces virion internalization predominantly through clathrin-dependent endocytosis. Class II fusion protein that promotes fusion of viral membrane with host endosomal membrane after endocytosis of the virion. The protein is Envelopment polyprotein (GP) of Tula orthohantavirus (TULV).